We begin with the raw amino-acid sequence, 91 residues long: Small ribosomal subunit protein uS19 (91 aa).

Belongs to the universal ribosomal protein uS19 family.

Protein S19 forms a complex with S13 that binds strongly to the 16S ribosomal RNA. The sequence is that of Small ribosomal subunit protein uS19 from Methylobacillus flagellatus (strain ATCC 51484 / DSM 6875 / VKM B-1610 / KT).